Here is a 309-residue protein sequence, read N- to C-terminus: Olfactory receptor 8U9 (309 aa).

The Extracellular portion of the chain corresponds to 1–28 (MTQINCTQVTEFILVGLTDRQELKMPLF). The N-linked (GlcNAc...) asparagine glycan is linked to asparagine 5. A helical transmembrane segment spans residues 29–49 (VLFLSIYLFTVVGNLGLILLI). Over 50–56 (RTDEKLN) the chain is Cytoplasmic. The helical transmembrane segment at 57–77 (TPMYFFLSNLAFVDFCYSSVI) threads the bilayer. The Extracellular portion of the chain corresponds to 78-97 (TPKMLGNFLYKQNSISFNAC). A disulfide bond links cysteine 97 and cysteine 179. Residues 98–118 (AAQLGCFLAFMTAECLLLASM) form a helical membrane-spanning segment. Topologically, residues 119 to 143 (AYDRYVAICNPLMYMVVMSPGICIQ) are cytoplasmic. Residues 144–164 (LVAAPHSYSILVALFHTILTF) form a helical membrane-spanning segment. Topologically, residues 165 to 204 (RLSYCHSNIVNHFYCDDMPLLRLTCSDTRFKQLWIFACAG) are extracellular. Residues 205–225 (IMFISSLLIVFVSYMFIISAI) traverse the membrane as a helical segment. The Cytoplasmic segment spans residues 226-239 (LRMHSAEGRQKAFS). Residues 240-260 (TCGSHMLAVTIFYGTLIFMYL) traverse the membrane as a helical segment. The Extracellular portion of the chain corresponds to 261 to 272 (QPSSSHALDTDK). Residues 273 to 293 (MASVFYTVIIPMLNPLIYSLQ) form a helical membrane-spanning segment. The Cytoplasmic segment spans residues 294-309 (NKEVKEALKKIIINKN).

This sequence belongs to the G-protein coupled receptor 1 family.

It localises to the cell membrane. Its function is as follows. Odorant receptor. This chain is Olfactory receptor 8U9 (OR8U9), found in Homo sapiens (Human).